Reading from the N-terminus, the 208-residue chain is Uracil phosphoribosyltransferase (208 aa).

Residues arginine 78, arginine 103, and 130–138 (DPMLATGGS) contribute to the 5-phospho-alpha-D-ribose 1-diphosphate site. Uracil contacts are provided by residues isoleucine 193 and 198 to 200 (GDA). Aspartate 199 contacts 5-phospho-alpha-D-ribose 1-diphosphate.

This sequence belongs to the UPRTase family. Requires Mg(2+) as cofactor.

It catalyses the reaction UMP + diphosphate = 5-phospho-alpha-D-ribose 1-diphosphate + uracil. It functions in the pathway pyrimidine metabolism; UMP biosynthesis via salvage pathway; UMP from uracil: step 1/1. With respect to regulation, allosterically activated by GTP. Catalyzes the conversion of uracil and 5-phospho-alpha-D-ribose 1-diphosphate (PRPP) to UMP and diphosphate. The chain is Uracil phosphoribosyltransferase from Actinobacillus pleuropneumoniae serotype 5b (strain L20).